The following is a 150-amino-acid chain: SsrA-binding protein (150 aa).

The protein belongs to the SmpB family.

The protein resides in the cytoplasm. Required for rescue of stalled ribosomes mediated by trans-translation. Binds to transfer-messenger RNA (tmRNA), required for stable association of tmRNA with ribosomes. tmRNA and SmpB together mimic tRNA shape, replacing the anticodon stem-loop with SmpB. tmRNA is encoded by the ssrA gene; the 2 termini fold to resemble tRNA(Ala) and it encodes a 'tag peptide', a short internal open reading frame. During trans-translation Ala-aminoacylated tmRNA acts like a tRNA, entering the A-site of stalled ribosomes, displacing the stalled mRNA. The ribosome then switches to translate the ORF on the tmRNA; the nascent peptide is terminated with the 'tag peptide' encoded by the tmRNA and targeted for degradation. The ribosome is freed to recommence translation, which seems to be the essential function of trans-translation. This Campylobacter jejuni subsp. jejuni serotype O:6 (strain 81116 / NCTC 11828) protein is SsrA-binding protein.